The sequence spans 299 residues: MKIVKRILLVLLSLFFTIVYSNAQTDNLTLKIENVLKAKNARIGVAIFNSNEKDTLKINNDFHFPMQSVMKFPIALAVLSEIDKGNLSFEQKIEITPQDLLPKTWSPIKEEFPNGTTLTIEQILNYTVSESDNIGCDILLKLIGGTDSVQKFLNANHFTDISIKANEEQMHKDWNTQYQNWATPTAMNKLLIDTYNNKNQLLSKKSYDFIWKIMRETTTGSNRLKGQLPKNTIVAHKTGTSGINNGIAAATNDVGVITLPNGQLIFISVFVAESKETSEINEKIISDIAKITWNYYLNK.

An N-terminal signal peptide occupies residues 1-23 (MKIVKRILLVLLSLFFTIVYSNA). The active-site Nucleophile; acyl-ester intermediate is Ser68. Residues Lys71, Ser131, and Glu167 each coordinate a beta-lactam. The active-site Proton acceptor is Glu167.

It belongs to the class-A beta-lactamase family.

The enzyme catalyses a beta-lactam + H2O = a substituted beta-amino acid. Its activity is regulated as follows. Inhibited by the beta-lactamase-blocking agent clavulanic acid. Class A beta-lactamase which confers resistance to the beta-lactam antibiotics, including penicillins and cephalosporins, in E.coli strain JM109. Acts via hydrolysis of the beta-lactam ring. Has penicillin-, and cephalosporin-hydrolyzing activities. The chain is Beta-lactamase VEB-1 from Pseudomonas aeruginosa.